The primary structure comprises 236 residues: Serine/arginine-rich SC35-like splicing factor SCL28 (236 aa).

Disordered stretches follow at residues 1-53 (MARA…LIRN) and 124-219 (EENR…RVLT). Basic and acidic residues predominate over residues 14–43 (RPRDRSPPRERKGYDDNRLRERPSSRDHES). Positions 47 to 125 (SGLLIRNLPL…REIAIVFAEE (79 aa)) constitute an RRM domain. Residues 149–176 (TSHRSPRRRYRSHSRSRSPPRRESRHSK) are compositionally biased toward basic residues. Phosphoserine is present on Ser184. Basic and acidic residues predominate over residues 199-217 (RNEREYKSRNCRSPREERV).

Belongs to the splicing factor SR family. SCL subfamily. In terms of assembly, component of the spliceosome. Interacts with RS2Z33, CYP59, CYP63 and CYP95.

The protein localises to the nucleus speckle. In terms of biological role, involved in intron recognition and spliceosome assembly. Probably active at the 5' splice sites. The polypeptide is Serine/arginine-rich SC35-like splicing factor SCL28 (SCL28) (Arabidopsis thaliana (Mouse-ear cress)).